The sequence spans 358 residues: UDP-N-acetylglucosamine--N-acetylmuramyl-(pentapeptide) pyrophosphoryl-undecaprenol N-acetylglucosamine transferase (358 aa).

2 residues coordinate UDP-N-acetyl-alpha-D-glucosamine: S196 and Q287.

It belongs to the glycosyltransferase 28 family. MurG subfamily.

It localises to the cell membrane. It carries out the reaction Mur2Ac(oyl-L-Ala-gamma-D-Glu-L-Lys-D-Ala-D-Ala)-di-trans,octa-cis-undecaprenyl diphosphate + UDP-N-acetyl-alpha-D-glucosamine = beta-D-GlcNAc-(1-&gt;4)-Mur2Ac(oyl-L-Ala-gamma-D-Glu-L-Lys-D-Ala-D-Ala)-di-trans,octa-cis-undecaprenyl diphosphate + UDP + H(+). It functions in the pathway cell wall biogenesis; peptidoglycan biosynthesis. Functionally, cell wall formation. Catalyzes the transfer of a GlcNAc subunit on undecaprenyl-pyrophosphoryl-MurNAc-pentapeptide (lipid intermediate I) to form undecaprenyl-pyrophosphoryl-MurNAc-(pentapeptide)GlcNAc (lipid intermediate II). This Streptococcus uberis (strain ATCC BAA-854 / 0140J) protein is UDP-N-acetylglucosamine--N-acetylmuramyl-(pentapeptide) pyrophosphoryl-undecaprenol N-acetylglucosamine transferase.